We begin with the raw amino-acid sequence, 698 residues long: Elongation factor G (698 aa).

The tr-type G domain occupies 8-290; it reads ERYRNIGISA…AVIELLPSPV (283 aa). GTP contacts are provided by residues 17 to 24, 88 to 92, and 142 to 145; these read AHIDAGKT, DTPGH, and NKMD.

The protein belongs to the TRAFAC class translation factor GTPase superfamily. Classic translation factor GTPase family. EF-G/EF-2 subfamily.

It is found in the cytoplasm. Its function is as follows. Catalyzes the GTP-dependent ribosomal translocation step during translation elongation. During this step, the ribosome changes from the pre-translocational (PRE) to the post-translocational (POST) state as the newly formed A-site-bound peptidyl-tRNA and P-site-bound deacylated tRNA move to the P and E sites, respectively. Catalyzes the coordinated movement of the two tRNA molecules, the mRNA and conformational changes in the ribosome. This is Elongation factor G from Aromatoleum aromaticum (strain DSM 19018 / LMG 30748 / EbN1) (Azoarcus sp. (strain EbN1)).